The sequence spans 395 residues: MKRFLLCSFALVLLYPAGIDMYLVGLPRIAADLNASEAQLHIAFSVYLAGMATAMLFAGKIADQSGRKPVAIVGALVFMMASLLCSRASEGSLFLSGRFLQGVGAGGCYVVAFAILRDTLDEHRRAKVLSLLNGITCIVPVLAPVVGHLIMLRFPWQSLFYTMSAMGIIVGLLSLFILRETRPARRAPRDLSRSSPAAESLVNRFFVSRLAITTLSVSVILTFVNASPVLLMEVMGFSRGDYAITMALTAGVSMVVSFSTPFALGLFKPRTLMLVSQGLFLTAGMTLSLAHTNTVTLFGLTLICAGFSVGFGVAMSQALGPFSLRAGVASSTLGIAQVCGSSLWIWLAAILGISAMNMLIGILIGCSIVSILLIFSVAPNRSVAEHEEIPYQSRS.

12 consecutive transmembrane segments (helical) span residues 4-24, 42-62, 69-89, 93-113, 131-151, 158-178, 217-237, 247-267, 271-291, 295-315, 333-353, and 358-378; these read FLLC…MYLV, IAFS…GKIA, PVAI…SRAS, LFLS…VVAF, LLNG…HLIM, SLFY…LFIL, VSVI…VMGF, ALTA…LGLF, TLML…SLAH, VTLF…GVAM, LGIA…ILGI, and MLIG…FSVA.

The protein belongs to the major facilitator superfamily. DHA1 family. MdtL (TC 2.A.1.2.22) subfamily.

The protein localises to the cell inner membrane. This chain is Multidrug resistance protein MdtL, found in Salmonella heidelberg (strain SL476).